Consider the following 262-residue polypeptide: Acyl-[acyl-carrier-protein]--UDP-N-acetylglucosamine O-acyltransferase (262 aa).

Belongs to the transferase hexapeptide repeat family. LpxA subfamily. Homotrimer.

It localises to the cytoplasm. The enzyme catalyses a (3R)-hydroxyacyl-[ACP] + UDP-N-acetyl-alpha-D-glucosamine = a UDP-3-O-[(3R)-3-hydroxyacyl]-N-acetyl-alpha-D-glucosamine + holo-[ACP]. It participates in glycolipid biosynthesis; lipid IV(A) biosynthesis; lipid IV(A) from (3R)-3-hydroxytetradecanoyl-[acyl-carrier-protein] and UDP-N-acetyl-alpha-D-glucosamine: step 1/6. Functionally, involved in the biosynthesis of lipid A, a phosphorylated glycolipid that anchors the lipopolysaccharide to the outer membrane of the cell. The protein is Acyl-[acyl-carrier-protein]--UDP-N-acetylglucosamine O-acyltransferase of Pectobacterium carotovorum subsp. carotovorum (strain PC1).